A 128-amino-acid polypeptide reads, in one-letter code: MRHRKSGRHLSRTSSHRKAMFQNMAVSLIEHELIKTTLPKAKELRRVAEPLITLAKEDSVANRRLAFDRTRSKSAVGKLFNDLGKRYATRQGGYLRILKCGFRAGDNAPMAYVELVDRPVGGAVEAAE.

The protein belongs to the bacterial ribosomal protein bL17 family. Part of the 50S ribosomal subunit. Contacts protein L32.

This chain is Large ribosomal subunit protein bL17, found in Pseudomonas entomophila (strain L48).